A 149-amino-acid chain; its full sequence is Ricin B-like lectin (149 aa).

The residue at position 2 (Ser-2) is an N-acetylserine. Residues Asp-21, Gly-24, Asn-39, and Asn-47 each coordinate a carbohydrate. The interval 110-112 is involved in dimerization; the sequence is PNL.

In terms of assembly, homodimer. Post-translationally, the N-terminus is blocked.

Lectin specific for terminal, non-reducing N-acetylgalactosamine (Gal-NAc)-containing carbohydrates including N,N'-diacetyllactosediamine/LDN (GalNAcbeta1-4GlcNAc, LacdiNAc). Specific also for carbohydrates containing N-acetylglucosamine (-GlcNAc) or N-acetyllactosamine (-Galbeta1-4GlcNAc) at the reducing end. Agglutinates human blood group A, AB, B and O erythrocytes with a strong preference for group A. Agglutinates bovine erythrocytes with a very low specificity. Binds carbohydrates bivalently, which is required for its biological activity. Exhibits insecticidal activity against the fruit fly D.melanogaster, mosquito A.aegypti, and amoebozoa A.castellanii. Has anti-nutritional activity against Colorado potato beetle L.decemlineata, and against worm C.elegans. Has antiproliferative activity against human leukemic T-cells. Has an immunostimulatory effect on human antigen-presenting dendritic cells, which are subsequently able to induce efficient T-cell immune responses. This is Ricin B-like lectin from Clitocybe nebularis (Clouded agaric).